Consider the following 1298-residue polypeptide: Phosphoribosylformylglycinamidine synthase (1298 aa).

The disordered stretch occupies residues 301–328 (APFPGASTGSGGEIRDEGATGRGAKPKA). ATP is bound by residues 305–316 (GASTGSGGEIRD), 384–386 (TGY), and alanine 676. Positions 677, 716, 720, and 884 each coordinate Mg(2+). Residue serine 886 coordinates ATP. Residues 1045-1298 (VAVLREQGVN…MFRNARVWVN (254 aa)) form the Glutamine amidotransferase type-1 domain. The active-site Nucleophile is the cysteine 1138. Catalysis depends on residues histidine 1263 and glutamate 1265.

The protein in the N-terminal section; belongs to the FGAMS family. As to quaternary structure, monomer.

It is found in the cytoplasm. It carries out the reaction N(2)-formyl-N(1)-(5-phospho-beta-D-ribosyl)glycinamide + L-glutamine + ATP + H2O = 2-formamido-N(1)-(5-O-phospho-beta-D-ribosyl)acetamidine + L-glutamate + ADP + phosphate + H(+). The protein operates within purine metabolism; IMP biosynthesis via de novo pathway; 5-amino-1-(5-phospho-D-ribosyl)imidazole from N(2)-formyl-N(1)-(5-phospho-D-ribosyl)glycinamide: step 1/2. Its function is as follows. Phosphoribosylformylglycinamidine synthase involved in the purines biosynthetic pathway. Catalyzes the ATP-dependent conversion of formylglycinamide ribonucleotide (FGAR) and glutamine to yield formylglycinamidine ribonucleotide (FGAM) and glutamate. This is Phosphoribosylformylglycinamidine synthase from Pseudomonas fluorescens (strain Pf0-1).